Consider the following 138-residue polypeptide: Small ribosomal subunit protein uS11c (138 aa).

The tract at residues 1–23 (MAKAIPRRSSRRNGRIGSRKSAR) is disordered.

It belongs to the universal ribosomal protein uS11 family. In terms of assembly, part of the 30S ribosomal subunit.

The protein localises to the plastid. The protein resides in the chloroplast. This is Small ribosomal subunit protein uS11c from Ipomoea purpurea (Common morning glory).